Consider the following 252-residue polypeptide: Phosphomannomutase (252 aa).

Asp13 serves as the catalytic Nucleophile. Residues Asp13 and Asp15 each contribute to the Mg(2+) site. Asp15 functions as the Proton donor/acceptor in the catalytic mechanism. Residues Arg22, Arg124, Arg135, Arg142, Ser180, and Asp182 each coordinate alpha-D-mannose 1-phosphate. The Mg(2+) site is built by Asp208, Tyr220, and Thr225.

The protein belongs to the eukaryotic PMM family. In terms of assembly, homodimer. Requires Mg(2+) as cofactor. Expressed in roots, leaves, stems and flowers.

Its subcellular location is the cytoplasm. It catalyses the reaction alpha-D-mannose 1-phosphate = D-mannose 6-phosphate. It participates in nucleotide-sugar biosynthesis; GDP-alpha-D-mannose biosynthesis; alpha-D-mannose 1-phosphate from D-fructose 6-phosphate: step 2/2. Its function is as follows. Catalyzes the interconversion of mannose-6-phosphate to mannose-1-phosphate, the precursor for the synthesis of GDP-mannose. GDP-mannose is an essential sugar nucleotide for the synthesis of D-mannose-containing cell wall polysaccharides (galactomannans and glucomannans), glycolipids, glycoproteins and the antioxidant L-ascorbate. Involved in the biosynthesis of ascorbate and polysaccharides in response to abiotic stress during seed germination. This is Phosphomannomutase from Dendrobium officinale (Orchid).